A 185-amino-acid polypeptide reads, in one-letter code: Endoribonuclease YbeY (185 aa).

Zn(2+)-binding residues include H135, H139, and H145.

It belongs to the endoribonuclease YbeY family. Zn(2+) serves as cofactor.

It localises to the cytoplasm. Single strand-specific metallo-endoribonuclease involved in late-stage 70S ribosome quality control and in maturation of the 3' terminus of the 16S rRNA. This is Endoribonuclease YbeY from Parasynechococcus marenigrum (strain WH8102).